A 946-amino-acid chain; its full sequence is Atos homolog protein A (946 aa).

The tract at residues 24–32 is transactivation domain 1 (TAD1); that stretch reads ALLITEGRT. Residues 34–43 are compositionally biased toward basic and acidic residues; it reads EHSVKGRTEG. 4 disordered regions span residues 34 to 58, 246 to 271, 484 to 524, and 547 to 567; these read EHSVKGRTEGPHCPPAQLSQPAPNK, SVTQPHNSQDNDQNSAPVSQHAFTKP, FQSS…TGNQ, and SCTDSFHKPQKDNPKICSQKV. 2 stretches are compositionally biased toward polar residues: residues 247–267 and 484–500; these read VTQPHNSQDNDQNSAPVSQHA and FQSSGQSTVPSSNNENI. Composition is skewed to basic and acidic residues over residues 503–517 and 547–560; these read LPEKRDIKQSEHGEI and SCTDSFHKPQKDNP. The tract at residues 749–806 is required for macropage invasion; it reads LLGNFEESVLNYRFEPLGVVEGFTAEVGASGIFCPTHMTLPVKVSFYSVSDDNAPSPY. Residues 833–841 are transactivation domain 2 (TAD2); that stretch reads FNPNKTVVK.

The protein belongs to the ATOS family.

The protein resides in the nucleus. In terms of biological role, transcription regulator that syncronizes transcriptional and translational programs to promote macrophage invasion of tissues. This chain is Atos homolog protein A (atosa), found in Xenopus tropicalis (Western clawed frog).